Consider the following 454-residue polypeptide: uncharacterized protein (454 aa).

The segment at 422–454 (EWLPPAHLDHGQPRTNSYFHPEKLLHDSDEDDP) is disordered.

The protein belongs to the Rv1128c/1148c/1588c/1702c/1945/3466 family.

This is an uncharacterized protein from Mycobacterium tuberculosis (strain CDC 1551 / Oshkosh).